Here is a 420-residue protein sequence, read N- to C-terminus: Serine hydroxymethyltransferase (420 aa).

(6S)-5,6,7,8-tetrahydrofolate is bound by residues Leu-121 and 125–127 (GHL). An N6-(pyridoxal phosphate)lysine modification is found at Lys-230. Residue 355–357 (SPF) participates in (6S)-5,6,7,8-tetrahydrofolate binding.

Belongs to the SHMT family. As to quaternary structure, homodimer. It depends on pyridoxal 5'-phosphate as a cofactor.

The protein resides in the cytoplasm. The catalysed reaction is (6R)-5,10-methylene-5,6,7,8-tetrahydrofolate + glycine + H2O = (6S)-5,6,7,8-tetrahydrofolate + L-serine. The protein operates within one-carbon metabolism; tetrahydrofolate interconversion. Its pathway is amino-acid biosynthesis; glycine biosynthesis; glycine from L-serine: step 1/1. Functionally, catalyzes the reversible interconversion of serine and glycine with tetrahydrofolate (THF) serving as the one-carbon carrier. This reaction serves as the major source of one-carbon groups required for the biosynthesis of purines, thymidylate, methionine, and other important biomolecules. Also exhibits THF-independent aldolase activity toward beta-hydroxyamino acids, producing glycine and aldehydes, via a retro-aldol mechanism. The protein is Serine hydroxymethyltransferase of Streptococcus mutans serotype c (strain ATCC 700610 / UA159).